Here is a 56-residue protein sequence, read N- to C-terminus: Large ribosomal subunit protein bL32 (56 aa).

Residues 1–38 form a disordered region; that stretch reads MAVQQNKKSRSKRGMRRSHDSLSTAQLSVDATSGELHR. Over residues 7-16 the composition is skewed to basic residues; the sequence is KKSRSKRGMR. The segment covering 21–31 has biased composition (polar residues); sequence SLSTAQLSVDA.

The protein belongs to the bacterial ribosomal protein bL32 family.

This chain is Large ribosomal subunit protein bL32, found in Shewanella woodyi (strain ATCC 51908 / MS32).